The sequence spans 228 residues: 7-cyano-7-deazaguanine synthase (228 aa).

13–23 (LSGGMDSTLSS) is a binding site for ATP. 4 residues coordinate Zn(2+): Cys-192, Cys-200, Cys-203, and Cys-206.

Belongs to the QueC family. The cofactor is Zn(2+).

The enzyme catalyses 7-carboxy-7-deazaguanine + NH4(+) + ATP = 7-cyano-7-deazaguanine + ADP + phosphate + H2O + H(+). It functions in the pathway purine metabolism; 7-cyano-7-deazaguanine biosynthesis. Catalyzes the ATP-dependent conversion of 7-carboxy-7-deazaguanine (CDG) to 7-cyano-7-deazaguanine (preQ(0)). This chain is 7-cyano-7-deazaguanine synthase, found in Aliarcobacter butzleri (strain RM4018) (Arcobacter butzleri).